A 48-amino-acid chain; its full sequence is ATP synthase protein 8 (48 aa).

Residues glutamine 12–leucine 32 form a helical membrane-spanning segment.

This sequence belongs to the ATPase protein 8 family. As to quaternary structure, F-type ATPases have 2 components, CF(1) - the catalytic core - and CF(0) - the membrane proton channel.

It is found in the mitochondrion membrane. Mitochondrial membrane ATP synthase (F(1)F(0) ATP synthase or Complex V) produces ATP from ADP in the presence of a proton gradient across the membrane which is generated by electron transport complexes of the respiratory chain. F-type ATPases consist of two structural domains, F(1) - containing the extramembraneous catalytic core and F(0) - containing the membrane proton channel, linked together by a central stalk and a peripheral stalk. During catalysis, ATP synthesis in the catalytic domain of F(1) is coupled via a rotary mechanism of the central stalk subunits to proton translocation. Part of the complex F(0) domain. Minor subunit located with subunit a in the membrane. This Candida glabrata (strain ATCC 2001 / BCRC 20586 / JCM 3761 / NBRC 0622 / NRRL Y-65 / CBS 138) (Yeast) protein is ATP synthase protein 8 (ATP8).